The primary structure comprises 216 residues: 3-keto-L-gulonate-6-phosphate decarboxylase UlaD (216 aa).

Substrate is bound at residue Asp-11. Mg(2+)-binding residues include Glu-33 and Asp-62. Arg-192 is a binding site for substrate.

This sequence belongs to the HPS/KGPDC family. KGPDC subfamily. Homodimer. It depends on Mg(2+) as a cofactor.

It carries out the reaction 3-dehydro-L-gulonate 6-phosphate + H(+) = L-xylulose 5-phosphate + CO2. Its pathway is cofactor degradation; L-ascorbate degradation; D-xylulose 5-phosphate from L-ascorbate: step 2/4. Functionally, catalyzes the decarboxylation of 3-keto-L-gulonate-6-P into L-xylulose-5-P. Is involved in the anaerobic L-ascorbate utilization. The chain is 3-keto-L-gulonate-6-phosphate decarboxylase UlaD from Escherichia fergusonii (strain ATCC 35469 / DSM 13698 / CCUG 18766 / IAM 14443 / JCM 21226 / LMG 7866 / NBRC 102419 / NCTC 12128 / CDC 0568-73).